Reading from the N-terminus, the 254-residue chain is Phosphoglycerate mutase 1 (254 aa).

Substrate is bound by residues 10–17 (RHGESTWN) and 23–24 (SG). The Tele-phosphohistidine intermediate role is filled by H11. 2 positions are modified to phosphoserine: S14 and S23. Phosphotyrosine is present on Y26. The residue at position 31 (S31) is a Phosphoserine. Residues R62, 89 to 92 (ERHY), and K100 each bind substrate. The active-site Proton donor/acceptor is E89. K106 is modified (N6-acetyllysine). 116–117 (RR) provides a ligand contact to substrate. The residue at position 118 (S118) is a Phosphoserine. Residue 187-188 (GN) coordinates substrate. N6-acetyllysine; alternate is present on K251. K251 carries the N6-succinyllysine; alternate modification. 2 positions are modified to N6-acetyllysine: K253 and K254.

It belongs to the phosphoglycerate mutase family. BPG-dependent PGAM subfamily. Homodimer. Post-translationally, acetylated at Lys-253, Lys-253 and Lys-254 under high glucose condition. Acetylation increases catalytic activity. Under glucose restriction SIRT1 levels dramatically increase and it deacetylates the enzyme.

The catalysed reaction is (2R)-2-phosphoglycerate = (2R)-3-phosphoglycerate. It catalyses the reaction (2R)-3-phospho-glyceroyl phosphate = (2R)-2,3-bisphosphoglycerate + H(+). Functionally, catalyzes the interconversion of 2-phosphoglycerate and 3-phosphoglyceratea crucial step in glycolysis, by using 2,3-bisphosphoglycerate. Also catalyzes the interconversion of (2R)-2,3-bisphosphoglycerate and (2R)-3-phospho-glyceroyl phosphate. The protein is Phosphoglycerate mutase 1 of Bos taurus (Bovine).